Consider the following 339-residue polypeptide: Glycerol-3-phosphate dehydrogenase [NAD(P)+] (339 aa).

Residues serine 15, tyrosine 16, histidine 36, and lysine 110 each coordinate NADPH. The sn-glycerol 3-phosphate site is built by lysine 110, glycine 139, and threonine 141. An NADPH-binding site is contributed by alanine 143. Residues lysine 195, aspartate 248, serine 258, arginine 259, and asparagine 260 each contribute to the sn-glycerol 3-phosphate site. Lysine 195 (proton acceptor) is an active-site residue. An NADPH-binding site is contributed by arginine 259. Valine 283 and glutamate 285 together coordinate NADPH.

The protein belongs to the NAD-dependent glycerol-3-phosphate dehydrogenase family.

The protein resides in the cytoplasm. It carries out the reaction sn-glycerol 3-phosphate + NAD(+) = dihydroxyacetone phosphate + NADH + H(+). The catalysed reaction is sn-glycerol 3-phosphate + NADP(+) = dihydroxyacetone phosphate + NADPH + H(+). It participates in membrane lipid metabolism; glycerophospholipid metabolism. Catalyzes the reduction of the glycolytic intermediate dihydroxyacetone phosphate (DHAP) to sn-glycerol 3-phosphate (G3P), the key precursor for phospholipid synthesis. The protein is Glycerol-3-phosphate dehydrogenase [NAD(P)+] of Escherichia fergusonii (strain ATCC 35469 / DSM 13698 / CCUG 18766 / IAM 14443 / JCM 21226 / LMG 7866 / NBRC 102419 / NCTC 12128 / CDC 0568-73).